A 40-amino-acid polypeptide reads, in one-letter code: Photosystem II reaction center protein J (40 aa).

The helical transmembrane segment at 8-28 (IPLWLIGTVTGIPVIGLIGIF) threads the bilayer.

The protein belongs to the PsbJ family. As to quaternary structure, PSII is composed of 1 copy each of membrane proteins PsbA, PsbB, PsbC, PsbD, PsbE, PsbF, PsbH, PsbI, PsbJ, PsbK, PsbL, PsbM, PsbT, PsbX, PsbY, PsbZ, Psb30/Ycf12, at least 3 peripheral proteins of the oxygen-evolving complex and a large number of cofactors. It forms dimeric complexes.

The protein resides in the plastid. The protein localises to the chloroplast thylakoid membrane. In terms of biological role, one of the components of the core complex of photosystem II (PSII). PSII is a light-driven water:plastoquinone oxidoreductase that uses light energy to abstract electrons from H(2)O, generating O(2) and a proton gradient subsequently used for ATP formation. It consists of a core antenna complex that captures photons, and an electron transfer chain that converts photonic excitation into a charge separation. The protein is Photosystem II reaction center protein J of Vitis vinifera (Grape).